The sequence spans 90 residues: Small ribosomal subunit protein bS16 (90 aa).

This sequence belongs to the bacterial ribosomal protein bS16 family.

The polypeptide is Small ribosomal subunit protein bS16 (Streptococcus pyogenes serotype M4 (strain MGAS10750)).